The sequence spans 201 residues: Small ribosomal subunit protein uS4c (201 aa).

The interval 15–43 (LGALPGLTRKRPRSGSDLRNQSRSGKRSQ) is disordered. Residues 89–150 (MRLDNILFRL…EQRSRALIQN (62 aa)) enclose the S4 RNA-binding domain.

This sequence belongs to the universal ribosomal protein uS4 family. In terms of assembly, part of the 30S ribosomal subunit. Contacts protein S5. The interaction surface between S4 and S5 is involved in control of translational fidelity.

Its subcellular location is the plastid. The protein resides in the chloroplast. Its function is as follows. One of the primary rRNA binding proteins, it binds directly to 16S rRNA where it nucleates assembly of the body of the 30S subunit. In terms of biological role, with S5 and S12 plays an important role in translational accuracy. This is Small ribosomal subunit protein uS4c (rps4) from Drimys granadensis.